Here is a 146-residue protein sequence, read N- to C-terminus: SMR1 protein (146 aa).

Positions 1–22 (MKSLYLIFGLWILLACFQSGEG) are cleaved as a signal peptide. Disordered regions lie at residues 23 to 43 (VRGP…TLPH) and 99 to 146 (TAPD…GGGK). Residues 109–139 (PPTQLHSTEQANTKTDAKISNTTATTQNSTD) are compositionally biased toward polar residues. 2 N-linked (GlcNAc...) asparagine glycosylation sites follow: Asn-129 and Asn-136.

Several O-linked glycosylation sites might be present in the C-terminal part. In terms of tissue distribution, expressed predominantly in the acinar cells of the submandibular gland and to lesser extent in the prostate.

Its subcellular location is the secreted. Sialorphin may be involved in the modulation of mineral balance between at least four systems: kidney, bone, tooth and circulation. Its function is as follows. Submandibular gland peptide T is able to directly or indirectly down-regulate cardiovascular depression induced by septic shock (endotoxin stimuli), or anaphylactic challenge (nematode antigen sensitization). In terms of biological role, sialorphin is an endogenous inhibitor of neprilysin. Inhibits the breakdown of Met-enkephalin and substance P in isolated tissue from the dorsal zone of the rat spinal cord. Has an analgesic effect when administered to rats by intravenous injection. This Rattus norvegicus (Rat) protein is SMR1 protein (Vcsa1).